The sequence spans 478 residues: Leukotoxin secretion protein D (478 aa).

Topologically, residues 1–77 (MKIWLSGIYE…LAVAIVLASV (77 aa)) are cytoplasmic. Residues 78 to 98 (SKVEIVATAPGKLTFSGRSKE) traverse the membrane as a helical segment. Topologically, residues 99-478 (IKPIENTIVQ…ESVTESLRER (380 aa)) are periplasmic.

Belongs to the membrane fusion protein (MFP) (TC 8.A.1) family.

The protein localises to the cell inner membrane. Its function is as follows. Involved in the transport of the Leukotoxin. This chain is Leukotoxin secretion protein D (lktD), found in Pasteurella haemolytica-like sp. (strain 5943B).